Consider the following 380-residue polypeptide: Cytochrome b (380 aa).

A run of 4 helical transmembrane segments spans residues 34 to 54, 78 to 99, 114 to 134, and 179 to 199; these read FGSL…LLAM, WLIR…YFHI, WNTG…GYVL, and FFAL…IHLT. His-84 and His-98 together coordinate heme b. The heme b site is built by His-183 and His-197. His-202 lines the a ubiquinone pocket. 4 consecutive transmembrane segments (helical) span residues 227-247, 289-309, 321-341, and 348-368; these read LKDI…ALFS, LGGV…PFLH, ISQL…WVGS, and FIII…VLFP.

It belongs to the cytochrome b family. The cytochrome bc1 complex contains 11 subunits: 3 respiratory subunits (MT-CYB, CYC1 and UQCRFS1), 2 core proteins (UQCRC1 and UQCRC2) and 6 low-molecular weight proteins (UQCRH/QCR6, UQCRB/QCR7, UQCRQ/QCR8, UQCR10/QCR9, UQCR11/QCR10 and a cleavage product of UQCRFS1). This cytochrome bc1 complex then forms a dimer. Heme b is required as a cofactor.

The protein resides in the mitochondrion inner membrane. Its function is as follows. Component of the ubiquinol-cytochrome c reductase complex (complex III or cytochrome b-c1 complex) that is part of the mitochondrial respiratory chain. The b-c1 complex mediates electron transfer from ubiquinol to cytochrome c. Contributes to the generation of a proton gradient across the mitochondrial membrane that is then used for ATP synthesis. This Pachyptila turtur (Fairy prion) protein is Cytochrome b (MT-CYB).